Reading from the N-terminus, the 122-residue chain is uncharacterized protein (122 aa).

This is an uncharacterized protein from Escherichia coli (strain K12).